The chain runs to 265 residues: Short-chain dehydrogenase/reductase GME11373 (265 aa).

NADP(+)-binding residues include isoleucine 26, aspartate 72, asparagine 99, and arginine 132. Active-site proton donor residues include serine 148 and serine 149. 3 residues coordinate NADP(+): tyrosine 163, lysine 167, and threonine 198. Catalysis depends on tyrosine 163, which acts as the Proton acceptor. Residue lysine 167 is the Lowers pKa of active site Tyr of the active site.

The protein belongs to the short-chain dehydrogenases/reductases (SDR) family.

Its pathway is secondary metabolite biosynthesis. Short-chain dehydrogenase/reductase; part of the gene cluster that mediates the biosynthesis of dibenzodioxocinones such as pestalotiollide B, a novel class of inhibitors against cholesterol ester transfer protein (CEPT). The biosynthesis initiates from condensation of acetate and malonate units catalyzed by the non-reducing PKS pks8/GME11356. Pks8/GME11356 lacks a thioesterase (TE) domain, which is important to the cyclizing of the third ring of atrochrysone carboxylic acid, and the esterase GME11355 might play the role of TE and catalyzes the cyclization reaction of the C ring. The lactamase-like protein GME11357 (or other beta-lactamases in Pestalotiopsis microspora) probably hydrolyzes the thioester bond between the ACP of pks8/GME11356 and the intermediate to release atrochrysone carboxylic acid, which is spontaneously dehydrates to form endocrocin anthrone. Endocrocin anthrone is further converted to emodin via the endocrocin intermediate. Emodin is then oxidized by several enzymes such as the Baeyer-Villiger oxidase GME11358, the oxidoreductase GME11367, the short chain dehydrogenase/reductase GME11373, as well as by other oxidoreductases from the cluster, to modify the A and C rings and open the B ring, and finally yield monodictyphenone. The prenyltransferase GME11375 may catalyze the addition reaction between the C5 side chains and the carbon bone of dibenzodioxocinones. The remaining biochemical reactions to the final product dibenzodioxocinones should be methylation catalyzed by methyltransferase GME11366 and reduction and lactonization reaction catalyzed by a series of oxidordeuctases. This Pestalotiopsis microspora protein is Short-chain dehydrogenase/reductase GME11373.